The primary structure comprises 450 residues: 3',5'-cyclic-AMP phosphodiesterase 7B (450 aa).

Positions 97–420 (LDEDYLGQAR…AQWKSLLPRQ (324 aa)) constitute a PDEase domain. Catalysis depends on histidine 173, which acts as the Proton donor. The a divalent metal cation site is built by histidine 177, histidine 213, aspartate 214, and aspartate 323. A disordered region spans residues 418-450 (PRQHRSRGSSGSGPDHDHAGQGTESEEQEGDSP). Position 426 is a phosphoserine (serine 426). Over residues 441–450 (ESEEQEGDSP) the composition is skewed to acidic residues.

Belongs to the cyclic nucleotide phosphodiesterase family. PDE7 subfamily. A divalent metal cation is required as a cofactor. In terms of tissue distribution, highly expressed in brain. Also expressed in heart, liver, skeletal muscle and pancreas.

It catalyses the reaction 3',5'-cyclic AMP + H2O = AMP + H(+). The protein operates within purine metabolism; 3',5'-cyclic AMP degradation; AMP from 3',5'-cyclic AMP: step 1/1. With respect to regulation, inhibited by dipyridamole, IBMX and SCH 51866. Insensitive to zaprinast, rolipram, and milrinone. Its function is as follows. Hydrolyzes the second messenger cAMP, which is a key regulator of many important physiological processes. May be involved in the control of cAMP-mediated neural activity and cAMP metabolism in the brain. This is 3',5'-cyclic-AMP phosphodiesterase 7B from Homo sapiens (Human).